A 596-amino-acid chain; its full sequence is Elongation factor 4 (596 aa).

The 183-residue stretch at 2-184 (KHIRNFSIIA…VIVEQIPPPE (183 aa)) folds into the tr-type G domain. Residues 14–19 (DHGKST) and 131–134 (NKID) each bind GTP.

The protein belongs to the TRAFAC class translation factor GTPase superfamily. Classic translation factor GTPase family. LepA subfamily.

It localises to the cell inner membrane. It catalyses the reaction GTP + H2O = GDP + phosphate + H(+). Its function is as follows. Required for accurate and efficient protein synthesis under certain stress conditions. May act as a fidelity factor of the translation reaction, by catalyzing a one-codon backward translocation of tRNAs on improperly translocated ribosomes. Back-translocation proceeds from a post-translocation (POST) complex to a pre-translocation (PRE) complex, thus giving elongation factor G a second chance to translocate the tRNAs correctly. Binds to ribosomes in a GTP-dependent manner. In Shewanella sp. (strain MR-7), this protein is Elongation factor 4.